Here is a 346-residue protein sequence, read N- to C-terminus: MSERLVTSNEIGIDSTNEYSLRPEKINEYIGQDKVKERLNIFIKAAQRREEALDHVILYGPPGLGKTTLANIIANEMGGNLKITSGPAIERAGDLAAILTTLNTNDVLFIDEIHRLNRSVEEILYPAMEDYVLDIIIGKGAASKSIRLDLPKFTLIGATTRIGMLSSPLRDRFGVLCSMEYYTDEQLKEIIIRSAEILGCHITEEGAFEIAKRSRGTPRIANRLLKRVRDFAEVLYDNEITEEAAKKSLEILEVDGEGFDRIDNKILEAIIDNFNGGPVGIETLAYFVGEELDTIEDVYEPYLLQKGFIVRTPRGRMATDKAYKHLGRVRFNESKIDSKQCTLFEK.

Positions 1–182 (MSERLVTSNE…FGVLCSMEYY (182 aa)) are large ATPase domain (RuvB-L). Residues leucine 21, arginine 22, glycine 63, lysine 66, threonine 67, threonine 68, 129-131 (EDY), arginine 172, tyrosine 182, and arginine 219 each bind ATP. Residue threonine 67 participates in Mg(2+) binding. The tract at residues 183-253 (TDEQLKEIII…AAKKSLEILE (71 aa)) is small ATPAse domain (RuvB-S). The head domain (RuvB-H) stretch occupies residues 256-346 (GEGFDRIDNK…DSKQCTLFEK (91 aa)). DNA is bound by residues arginine 311 and arginine 316.

It belongs to the RuvB family. As to quaternary structure, homohexamer. Forms an RuvA(8)-RuvB(12)-Holliday junction (HJ) complex. HJ DNA is sandwiched between 2 RuvA tetramers; dsDNA enters through RuvA and exits via RuvB. An RuvB hexamer assembles on each DNA strand where it exits the tetramer. Each RuvB hexamer is contacted by two RuvA subunits (via domain III) on 2 adjacent RuvB subunits; this complex drives branch migration. In the full resolvosome a probable DNA-RuvA(4)-RuvB(12)-RuvC(2) complex forms which resolves the HJ.

It localises to the cytoplasm. The catalysed reaction is ATP + H2O = ADP + phosphate + H(+). Functionally, the RuvA-RuvB-RuvC complex processes Holliday junction (HJ) DNA during genetic recombination and DNA repair, while the RuvA-RuvB complex plays an important role in the rescue of blocked DNA replication forks via replication fork reversal (RFR). RuvA specifically binds to HJ cruciform DNA, conferring on it an open structure. The RuvB hexamer acts as an ATP-dependent pump, pulling dsDNA into and through the RuvAB complex. RuvB forms 2 homohexamers on either side of HJ DNA bound by 1 or 2 RuvA tetramers; 4 subunits per hexamer contact DNA at a time. Coordinated motions by a converter formed by DNA-disengaged RuvB subunits stimulates ATP hydrolysis and nucleotide exchange. Immobilization of the converter enables RuvB to convert the ATP-contained energy into a lever motion, pulling 2 nucleotides of DNA out of the RuvA tetramer per ATP hydrolyzed, thus driving DNA branch migration. The RuvB motors rotate together with the DNA substrate, which together with the progressing nucleotide cycle form the mechanistic basis for DNA recombination by continuous HJ branch migration. Branch migration allows RuvC to scan DNA until it finds its consensus sequence, where it cleaves and resolves cruciform DNA. The protein is Holliday junction branch migration complex subunit RuvB of Clostridium perfringens (strain ATCC 13124 / DSM 756 / JCM 1290 / NCIMB 6125 / NCTC 8237 / Type A).